The primary structure comprises 278 residues: MALKTFKPVTPSLRQLVLVDRRELYKGKPVKALTEGKSSSGGRNNLGRITVRFRGGGHKRVLRNVDFKRRENLNVPATVERIEYDPNRTAFIALITFPDGKQSYILAPQRLSPGDKVVAGESVDVKPGNAGPIGSMPVGTIVHNVELKIGKGGAIARSAGNYAQIVGRDQGYVTLRLNSGEQRLVHGQCFASVGAVSNPDHMNISLGKAGRNRWLGKRPHNRGVAMNPVDHPHGGGEGRTSGGRNPVTPWGVPTKGKKTRSNKRTDTFILSSRHNRKK.

The segment covering 212 to 221 has biased composition (basic residues); the sequence is NRWLGKRPHN. The segment at 212–278 is disordered; the sequence is NRWLGKRPHN…ILSSRHNRKK (67 aa).

It belongs to the universal ribosomal protein uL2 family. In terms of assembly, part of the 50S ribosomal subunit. Forms a bridge to the 30S subunit in the 70S ribosome.

Its function is as follows. One of the primary rRNA binding proteins. Required for association of the 30S and 50S subunits to form the 70S ribosome, for tRNA binding and peptide bond formation. It has been suggested to have peptidyltransferase activity; this is somewhat controversial. Makes several contacts with the 16S rRNA in the 70S ribosome. This chain is Large ribosomal subunit protein uL2, found in Methylorubrum populi (strain ATCC BAA-705 / NCIMB 13946 / BJ001) (Methylobacterium populi).